We begin with the raw amino-acid sequence, 236 residues long: Probable glutathione S-transferase BZ2 (236 aa).

The 80-residue stretch at 1–80 folds into the GST N-terminal domain; that stretch reads MRVLGGEVSP…YIEDVARESG (80 aa). Glutathione-binding positions include Ser9, Lys37, Ile51, and 64-65; that span reads ES. The region spanning 92 to 221 is the GST C-terminal domain; sequence DPYERAMHRF…LPDTEKVVQF (130 aa).

It belongs to the GST superfamily. HSP26 family.

The catalysed reaction is RX + glutathione = an S-substituted glutathione + a halide anion + H(+). It participates in pigment biosynthesis; anthocyanin biosynthesis. In Zea mays (Maize), this protein is Probable glutathione S-transferase BZ2 (BZ2).